The chain runs to 231 residues: 2,3-bisphosphoglycerate-dependent phosphoglycerate mutase (231 aa).

Substrate contacts are provided by residues 10-17, 23-24, R62, 89-92, K100, 116-117, and 185-186; these read RHGQSEWN, TG, ERHY, RR, and GN. Residue H11 is the Tele-phosphohistidine intermediate of the active site. Residue E89 is the Proton donor/acceptor of the active site.

The protein belongs to the phosphoglycerate mutase family. BPG-dependent PGAM subfamily. Homodimer.

The enzyme catalyses (2R)-2-phosphoglycerate = (2R)-3-phosphoglycerate. Its pathway is carbohydrate degradation; glycolysis; pyruvate from D-glyceraldehyde 3-phosphate: step 3/5. Catalyzes the interconversion of 2-phosphoglycerate and 3-phosphoglycerate. The polypeptide is 2,3-bisphosphoglycerate-dependent phosphoglycerate mutase (Buchnera aphidicola subsp. Acyrthosiphon pisum (strain APS) (Acyrthosiphon pisum symbiotic bacterium)).